The sequence spans 319 residues: Probable cytochrome c oxidase subunit 2 (319 aa).

Residues 1–33 form the signal peptide; it reads MSPNGSDRSPRRPMRRKLLQALTAGLVLATATG. Transmembrane regions (helical) follow at residues 63 to 83 and 101 to 121; these read WAAALATGVLVWGLILWATIF and MPIEALYTVVPLIIVSVLFYF. His-227, Cys-262, Cys-266, and His-270 together coordinate Cu cation.

This sequence belongs to the cytochrome c oxidase subunit 2 family. Cu cation serves as cofactor. The cofactor is heme.

It is found in the cell membrane. It carries out the reaction 4 Fe(II)-[cytochrome c] + O2 + 8 H(+)(in) = 4 Fe(III)-[cytochrome c] + 2 H2O + 4 H(+)(out). Functionally, subunits I and II form the functional core of the enzyme complex. Electrons originating in cytochrome c are transferred via heme a and Cu(A) to the binuclear center formed by heme a3 and Cu(B). The polypeptide is Probable cytochrome c oxidase subunit 2 (ctaC) (Streptomyces avermitilis (strain ATCC 31267 / DSM 46492 / JCM 5070 / NBRC 14893 / NCIMB 12804 / NRRL 8165 / MA-4680)).